A 95-amino-acid chain; its full sequence is Immunogenic miracidial antigen 8C (95 aa).

Residues 1–15 show a composition bias toward polar residues; it reads EFTISFSSPVISTGQ. A disordered region spans residues 1–95; that stretch reads EFTISFSSPV…PKKYGSGHKY (95 aa). Over residues 20–41 the composition is skewed to acidic residues; sequence GDEDYHDGDDDVDYTDDVDDVD. A compositionally biased stretch (polar residues) spans 45–59; it reads GSPSQLLQGGYQRNQ.

It belongs to the immunogenic miracidial antigen family.

The polypeptide is Immunogenic miracidial antigen 8C (8C) (Schistosoma japonicum (Blood fluke)).